The primary structure comprises 62 residues: Photosystem II reaction center protein Z (62 aa).

2 helical membrane passes run 8 to 28 (AVFA…VVFS) and 41 to 61 (FSGT…NSLI).

It belongs to the PsbZ family. As to quaternary structure, PSII is composed of 1 copy each of membrane proteins PsbA, PsbB, PsbC, PsbD, PsbE, PsbF, PsbH, PsbI, PsbJ, PsbK, PsbL, PsbM, PsbT, PsbY, PsbZ, Psb30/Ycf12, at least 3 peripheral proteins of the oxygen-evolving complex and a large number of cofactors. It forms dimeric complexes.

Its subcellular location is the plastid. It localises to the chloroplast thylakoid membrane. Functionally, may control the interaction of photosystem II (PSII) cores with the light-harvesting antenna, regulates electron flow through the 2 photosystem reaction centers. PSII is a light-driven water plastoquinone oxidoreductase, using light energy to abstract electrons from H(2)O, generating a proton gradient subsequently used for ATP formation. The protein is Photosystem II reaction center protein Z of Populus alba (White poplar).